A 562-amino-acid polypeptide reads, in one-letter code: Exonuclease subunit 2 (562 aa).

Residue 36 to 43 (GKNGGGKS) coordinates ATP.

To phage T5 protein D13 and to yeast RAD52. As to quaternary structure, consists of two subunits: Gp47 and Gp46.

In terms of biological role, exonuclease involved in phage DNA recombination, replication, and repair. This chain is Exonuclease subunit 2 (46), found in Escherichia phage RB69 (Bacteriophage RB69).